A 152-amino-acid chain; its full sequence is MSSQQQKQPCTVPPQLHQHEVKQPCQPPPQEPCAPKTKEPCHPIPEPCNPKVPEPCQPKVPEPCQPKVPEPCQPKVPEPCQPKVPEPCQPKVPEPCQPKVPEPCHPKAPEPCHPVVPEPCQPVAPEPCQPVVPEPCPPTVTPSPYQQKTKQK.

The interval 20–40 (EVKQPCQPPPQEPCAPKTKEP) is disordered. Tandem repeats lie at residues 27-34 (PPPQEPCA), 35-42 (PKTKEPCH), 43-49 (PIPEPCN), 50-57 (PKVPEPCQ), 58-65 (PKVPEPCQ), 66-73 (PKVPEPCQ), 74-81 (PKVPEPCQ), 82-89 (PKVPEPCQ), 90-97 (PKVPEPCQ), 98-105 (PKVPEPCH), 106-113 (PKAPEPCH), 114-121 (PVVPEPCQ), 122-129 (PVAPEPCQ), and 130-137 (PVVPEPCP). The interval 27-137 (PPPQEPCAPK…CQPVVPEPCP (111 aa)) is 14 X 8 AA approximate tandem repeats.

The protein belongs to the cornifin (SPRR) family. As to expression, in squamous epithelia lining the nasal vestibule and in the hard palate.

Its subcellular location is the cytoplasm. Functionally, cross-linked envelope protein of keratinocytes. It is a keratinocyte protein that first appears in the cell cytosol, but ultimately becomes cross-linked to membrane proteins by transglutaminase. All that results in the formation of an insoluble envelope beneath the plasma membrane. In Rattus norvegicus (Rat), this protein is Cornifin-A (Sprr1a).